Consider the following 134-residue polypeptide: Prolactin (134 aa).

A disulfide bond links Cys126 and Cys134.

This sequence belongs to the somatotropin/prolactin family.

The protein resides in the secreted. This chain is Prolactin, found in Bufo japonicus (Japanese common toad).